Reading from the N-terminus, the 550-residue chain is Atherin (550 aa).

A compositionally biased stretch (pro residues) spans 1–11; the sequence is MAGPPALPPPE. Disordered regions lie at residues 1–32 and 93–468; these read MAGPPALPPPETAAAATTAAAAASSSAASPHY and SYRN…KEKP. A compositionally biased stretch (low complexity) spans 12-30; sequence TAAAATTAAAAASSSAASP. In terms of domain architecture, SAMD1-like winged helix (WH) spans 24–100; it reads SSSAASPHYQ…SISYRNAARV (77 aa). Thr108 is modified (phosphothreonine). Positions 125-138 are enriched in pro residues; that stretch reads APPPTPAPPPPPAP. A compositionally biased stretch (low complexity) spans 139–160; that stretch reads VAAAAAPARAPRAAAAAAAATA. At Ser163 the chain carries Phosphoserine. A compositionally biased stretch (low complexity) spans 170–179; sequence GPRAQRAAPL. Pro residues-rich tracts occupy residues 180 to 205 and 214 to 245; these read AAPPPAPAAPPAAAPPAGPRRAPPPA and PLPPPPQPPAPPQQQQQPPPPPPPQQPQPPPE. Over residues 246–257 the composition is skewed to low complexity; sequence GGAARAGGPARP. Ser270 is modified (phosphoserine). Residues 290-300 show a composition bias toward basic and acidic residues; sequence AAARGRLERTR. Acidic residues predominate over residues 337-355; the sequence is KEEEEEEEEDDEDDDDDVV. Pro residues predominate over residues 437-448; it reads SPSPVPLPPGKP. Residues 474-542 enclose the SAM domain; the sequence is WTVMDVVEYF…KVLQQGHFED (69 aa).

In terms of assembly, homopolymerize into a closed pentameric ring. Interacts (via SAM domain) with L3MBTL3 (via SAM domain); the interaction mediates L3MBTL3 binding to chromatin. Interacts (via WH domain) with KDM1A; the interaction modulates KDM1A function.

It is found in the nucleus. The protein localises to the chromosome. The protein resides in the secreted. Its function is as follows. Unmethylated CpG islands (CGIs)-binding protein which localizes to H3K4me3-decorated CGIs, where it acts as a transcriptional repressor. Tethers L3MBTL3 to chromatin and interacts with the KDM1A histone demethylase complex to modulate H3K4me2 and H3K4me3 levels at CGIs. Plays a role in atherogenesis by binding with LDL on cell surface and promoting LDL oxidation which leads to the formation of foam cell. The sequence is that of Atherin (SAMD1) from Oryctolagus cuniculus (Rabbit).